We begin with the raw amino-acid sequence, 748 residues long: CCR4-NOT transcription complex subunit 10-A (748 aa).

A compositionally biased stretch (basic and acidic residues) spans 1-17 (MAADKAGEQGAEKHEDS). Disordered stretches follow at residues 1 to 25 (MAADKAGEQGAEKHEDSANCSGISD), 184 to 205 (SNNKNGKNNETNSNANNREPFA), 483 to 524 (KQEN…PPSS), and 605 to 635 (VSLGVSSNEQEQGSDKGENEPMESVGKQMPQ). Residues 185–200 (NNKNGKNNETNSNANN) are compositionally biased toward low complexity. 2 stretches are compositionally biased toward polar residues: residues 487-509 (GSKTSSQTGNTDSGGESSEVCSN) and 605-615 (VSLGVSSNEQE).

This sequence belongs to the CNOT10 family. Component of the CCR4-NOT complex. cnot10 and cnot11 form a subcomplex docked to the cnot1 scaffold.

Its subcellular location is the cytoplasm. It is found in the nucleus. Functionally, component of the CCR4-NOT complex which is one of the major cellular mRNA deadenylases and is linked to various cellular processes including bulk mRNA degradation, miRNA-mediated repression, translational repression during translational initiation and general transcription regulation. Additional complex functions may be a consequence of its influence on mRNA expression. Is not required for association of CNOT7 to the CCR4-NOT complex. The polypeptide is CCR4-NOT transcription complex subunit 10-A (cnot10-a) (Xenopus laevis (African clawed frog)).